Here is a 253-residue protein sequence, read N- to C-terminus: Geranylgeranylglyceryl phosphate synthase (253 aa).

Asp23 and Ser52 together coordinate Mg(2+). Residues 171 to 177, 202 to 203, and 224 to 225 each bind sn-glycerol 1-phosphate; these read YFEAGSG, GG, and GT.

The protein belongs to the GGGP/HepGP synthase family. Group II subfamily. In terms of assembly, homodimer. Mg(2+) is required as a cofactor.

The protein resides in the cytoplasm. The enzyme catalyses sn-glycerol 1-phosphate + (2E,6E,10E)-geranylgeranyl diphosphate = sn-3-O-(geranylgeranyl)glycerol 1-phosphate + diphosphate. The protein operates within membrane lipid metabolism; glycerophospholipid metabolism. Its activity is regulated as follows. Inhibited by high concentrations of magnesium (&gt;10 mM) and by EDTA in vitro. In terms of biological role, prenyltransferase that catalyzes the transfer of the geranylgeranyl moiety of geranylgeranyl diphosphate (GGPP) to the C3 hydroxyl of sn-glycerol-1-phosphate (G1P). This reaction is the first ether-bond-formation step in the biosynthesis of archaeal membrane lipids. Cannot use sn-glycerol-3-phosphate (G3P) as substrate. The sequence is that of Geranylgeranylglyceryl phosphate synthase from Thermoplasma acidophilum (strain ATCC 25905 / DSM 1728 / JCM 9062 / NBRC 15155 / AMRC-C165).